The chain runs to 255 residues: 5'-nucleotidase SurE (255 aa).

A divalent metal cation is bound by residues D11, D12, S43, and N99.

It belongs to the SurE nucleotidase family. Requires a divalent metal cation as cofactor.

The protein localises to the cytoplasm. It carries out the reaction a ribonucleoside 5'-phosphate + H2O = a ribonucleoside + phosphate. Nucleotidase that shows phosphatase activity on nucleoside 5'-monophosphates. The polypeptide is 5'-nucleotidase SurE (Caldanaerobacter subterraneus subsp. tengcongensis (strain DSM 15242 / JCM 11007 / NBRC 100824 / MB4) (Thermoanaerobacter tengcongensis)).